A 115-amino-acid polypeptide reads, in one-letter code: MADTLLKCTTRHVRLFTARVDNQDLVPSADELTLDLDPDNEFLWSDAVVSKVQQRFQQLVEAGAGGELSDYSLRRIGTDLEGYIRQLLQAGELSYNPDGRVQNFSMGLPRTPDLL.

It belongs to the complex I NdhM subunit family. NDH-1 can be composed of about 15 different subunits; different subcomplexes with different compositions have been identified which probably have different functions.

It localises to the cellular thylakoid membrane. The catalysed reaction is a plastoquinone + NADH + (n+1) H(+)(in) = a plastoquinol + NAD(+) + n H(+)(out). It catalyses the reaction a plastoquinone + NADPH + (n+1) H(+)(in) = a plastoquinol + NADP(+) + n H(+)(out). NDH-1 shuttles electrons from an unknown electron donor, via FMN and iron-sulfur (Fe-S) centers, to quinones in the respiratory and/or the photosynthetic chain. The immediate electron acceptor for the enzyme in this species is believed to be plastoquinone. Couples the redox reaction to proton translocation, and thus conserves the redox energy in a proton gradient. Cyanobacterial NDH-1 also plays a role in inorganic carbon-concentration. This chain is NAD(P)H-quinone oxidoreductase subunit M, found in Parasynechococcus marenigrum (strain WH8102).